The chain runs to 92 residues: Large ribosomal subunit protein eL43 (92 aa).

Positions 39, 42, 57, and 60 each coordinate Zn(2+). The segment at Cys39–Cys60 adopts a C4-type zinc-finger fold.

This sequence belongs to the eukaryotic ribosomal protein eL43 family. Putative zinc-binding subfamily. Part of the 50S ribosomal subunit. Contacts protein L2. Requires Zn(2+) as cofactor.

Binds to the 23S rRNA. This Haloarcula marismortui (strain ATCC 43049 / DSM 3752 / JCM 8966 / VKM B-1809) (Halobacterium marismortui) protein is Large ribosomal subunit protein eL43.